Here is a 2219-residue protein sequence, read N- to C-terminus: RNA-directed RNA polymerase L (2219 aa).

The endonuclease stretch occupies residues 26–289 (KLAFLVQTEP…TTEDDVEYLI (264 aa)). Mn(2+) is bound by residues Glu-51, Asp-89, and Glu-102. Lys-115 is a catalytic residue. Residues 1177–1373 (LSMKLNVSLA…YMSDQLNKFV (197 aa)) form the RdRp catalytic domain. A Mg(2+)-binding site is contributed by Asp-1335.

This sequence belongs to the Bunyavirales RNA polymerase family. In terms of assembly, homomultimer; the oligomeric structure is essential for the polymerase activity. Interacts with nucleoprotein N. Interacts with protein Z; this interaction inhibits viral transcription and replication, Z partially blocks the product exit tunnel for the releasing nascent RNA product. Mn(2+) serves as cofactor. Mg(2+) is required as a cofactor.

It localises to the virion. The protein resides in the host cytoplasm. The enzyme catalyses RNA(n) + a ribonucleoside 5'-triphosphate = RNA(n+1) + diphosphate. In terms of biological role, RNA-dependent RNA polymerase, which is responsible for the replication and transcription of the viral RNA genome using antigenomic RNA as an intermediate. During transcription, synthesizes subgenomic RNAs and assures their capping by a cap-snatching mechanism, which involves the endonuclease activity cleaving the host capped pre-mRNAs. These short capped RNAs are then used as primers for viral transcription. The 3'-end of subgenomic mRNAs molecules are heterogeneous and not polyadenylated. The replicase function is to direct synthesis of antigenomic and genomic RNA which are encapsidated and non capped. As a consequence of the use of the same enzyme for both transcription and replication, these mechanisms need to be well coordinated. These processes may be regulated by proteins N and Z in a dose-dependent manner. Z protein inhibits the viral polymerase L und thus the viral transcription and RNA synthesis. This Homo sapiens (Human) protein is RNA-directed RNA polymerase L.